A 141-amino-acid chain; its full sequence is Large ribosomal subunit protein uL11 (141 aa).

This sequence belongs to the universal ribosomal protein uL11 family. In terms of assembly, part of the ribosomal stalk of the 50S ribosomal subunit. Interacts with L10 and the large rRNA to form the base of the stalk. L10 forms an elongated spine to which L12 dimers bind in a sequential fashion forming a multimeric L10(L12)X complex. Post-translationally, one or more lysine residues are methylated.

Functionally, forms part of the ribosomal stalk which helps the ribosome interact with GTP-bound translation factors. The chain is Large ribosomal subunit protein uL11 from Lactobacillus delbrueckii subsp. bulgaricus (strain ATCC 11842 / DSM 20081 / BCRC 10696 / JCM 1002 / NBRC 13953 / NCIMB 11778 / NCTC 12712 / WDCM 00102 / Lb 14).